Here is a 209-residue protein sequence, read N- to C-terminus: Ribosomal RNA large subunit methyltransferase E (209 aa).

5 residues coordinate S-adenosyl-L-methionine: Gly63, Trp65, Asp83, Asp99, and Asp124. Lys164 acts as the Proton acceptor in catalysis.

The protein belongs to the class I-like SAM-binding methyltransferase superfamily. RNA methyltransferase RlmE family.

Its subcellular location is the cytoplasm. The catalysed reaction is uridine(2552) in 23S rRNA + S-adenosyl-L-methionine = 2'-O-methyluridine(2552) in 23S rRNA + S-adenosyl-L-homocysteine + H(+). Specifically methylates the uridine in position 2552 of 23S rRNA at the 2'-O position of the ribose in the fully assembled 50S ribosomal subunit. The polypeptide is Ribosomal RNA large subunit methyltransferase E (Aliivibrio fischeri (strain MJ11) (Vibrio fischeri)).